A 585-amino-acid polypeptide reads, in one-letter code: ATP-dependent lipid A-core flippase (585 aa).

Helical transmembrane passes span L23–I43, I64–T84, A140–Y160, W163–V183, I247–I267, and F273–L293. The 282-residue stretch at V27 to K308 folds into the ABC transmembrane type-1 domain. In terms of domain architecture, ABC transporter spans L340–L576. Residue G374–S381 participates in ATP binding.

The protein belongs to the ABC transporter superfamily. Lipid exporter (TC 3.A.1.106) family. As to quaternary structure, homodimer.

Its subcellular location is the cell inner membrane. The catalysed reaction is ATP + H2O + lipid A-core oligosaccharideSide 1 = ADP + phosphate + lipid A-core oligosaccharideSide 2.. Involved in lipopolysaccharide (LPS) biosynthesis. Translocates lipid A-core from the inner to the outer leaflet of the inner membrane. Transmembrane domains (TMD) form a pore in the inner membrane and the ATP-binding domain (NBD) is responsible for energy generation. The polypeptide is ATP-dependent lipid A-core flippase (Pseudoalteromonas atlantica (strain T6c / ATCC BAA-1087)).